Here is a 144-residue protein sequence, read N- to C-terminus: Deoxyuridine 5'-triphosphate nucleotidohydrolase (144 aa).

Residues 63–65, Asn-76, and 80–82 contribute to the substrate site; these read RSG and TID.

This sequence belongs to the dUTPase family. Mg(2+) is required as a cofactor.

It catalyses the reaction dUTP + H2O = dUMP + diphosphate + H(+). The protein operates within pyrimidine metabolism; dUMP biosynthesis; dUMP from dCTP (dUTP route): step 2/2. This enzyme is involved in nucleotide metabolism: it produces dUMP, the immediate precursor of thymidine nucleotides and it decreases the intracellular concentration of dUTP so that uracil cannot be incorporated into DNA. This Phocaeicola vulgatus (strain ATCC 8482 / DSM 1447 / JCM 5826 / CCUG 4940 / NBRC 14291 / NCTC 11154) (Bacteroides vulgatus) protein is Deoxyuridine 5'-triphosphate nucleotidohydrolase.